Reading from the N-terminus, the 124-residue chain is Small ribosomal subunit protein uS12 (124 aa).

Residue Asp89 is modified to 3-methylthioaspartic acid.

It belongs to the universal ribosomal protein uS12 family. As to quaternary structure, part of the 30S ribosomal subunit. Contacts proteins S8 and S17. May interact with IF1 in the 30S initiation complex.

Its function is as follows. With S4 and S5 plays an important role in translational accuracy. In terms of biological role, interacts with and stabilizes bases of the 16S rRNA that are involved in tRNA selection in the A site and with the mRNA backbone. Located at the interface of the 30S and 50S subunits, it traverses the body of the 30S subunit contacting proteins on the other side and probably holding the rRNA structure together. The combined cluster of proteins S8, S12 and S17 appears to hold together the shoulder and platform of the 30S subunit. This is Small ribosomal subunit protein uS12 from Blochmanniella pennsylvanica (strain BPEN).